Consider the following 180-residue polypeptide: Large ribosomal subunit protein uL6 (180 aa).

This sequence belongs to the universal ribosomal protein uL6 family. Part of the 50S ribosomal subunit.

In terms of biological role, this protein binds to the 23S rRNA, and is important in its secondary structure. It is located near the subunit interface in the base of the L7/L12 stalk, and near the tRNA binding site of the peptidyltransferase center. This is Large ribosomal subunit protein uL6 from Borreliella afzelii (strain PKo) (Borrelia afzelii).